Consider the following 266-residue polypeptide: Pyrrolizixenacetamide deacetylase (266 aa).

Residue Thr-28 coordinates acetate. The active-site Nucleophile is Ser-94. Leu-95 is a binding site for acetate. Active-site charge relay system residues include Asp-215 and His-242. His-242 is an acetate binding site.

Belongs to the AB hydrolase superfamily. Homodimer.

The catalysed reaction is pyrrolizixenacetamide + H2O = 3-amino-5,6,7,7a-tetrahydro-1H-pyrrolizin-1-one + acetate + H(+). In terms of biological role, involved in the biosynthetic pathway of pyrrolizwilline, a pyrrolizidine alkaloid. Catalyzes the N-deacetylation of pyrrolizixenacetamide. The chain is Pyrrolizixenacetamide deacetylase from Xenorhabdus hominickii.